The primary structure comprises 199 residues: 3-isopropylmalate dehydratase small subunit (199 aa).

This sequence belongs to the LeuD family. LeuD type 1 subfamily. As to quaternary structure, heterodimer of LeuC and LeuD.

It catalyses the reaction (2R,3S)-3-isopropylmalate = (2S)-2-isopropylmalate. It participates in amino-acid biosynthesis; L-leucine biosynthesis; L-leucine from 3-methyl-2-oxobutanoate: step 2/4. Catalyzes the isomerization between 2-isopropylmalate and 3-isopropylmalate, via the formation of 2-isopropylmaleate. This Bacillus velezensis (strain DSM 23117 / BGSC 10A6 / LMG 26770 / FZB42) (Bacillus amyloliquefaciens subsp. plantarum) protein is 3-isopropylmalate dehydratase small subunit.